The chain runs to 106 residues: UPF0145 protein Daci_3728 (106 aa).

This sequence belongs to the UPF0145 family.

This is UPF0145 protein Daci_3728 from Delftia acidovorans (strain DSM 14801 / SPH-1).